We begin with the raw amino-acid sequence, 660 residues long: Squalene--hopene cyclase (660 aa).

The stretch at 73–114 (EAKIGNYLRRVQGAHGGWPLVHDGEFDMSASVKAYFALKMIG) is one PFTB 1 repeat. Catalysis depends on Asp394, which acts as the Proton donor. PFTB repeat units follow at residues 419–460 (IDRG…GALL) and 536–586 (IRKA…ALMA).

This sequence belongs to the terpene cyclase/mutase family.

It is found in the cell membrane. It carries out the reaction squalene = hop-22(29)-ene. The catalysed reaction is squalene + H2O = hopan-22-ol. Its pathway is secondary metabolite biosynthesis; hopanoid biosynthesis. Its function is as follows. Catalyzes the cyclization of squalene into hopene. The chain is Squalene--hopene cyclase (shc) from Bradyrhizobium diazoefficiens (strain JCM 10833 / BCRC 13528 / IAM 13628 / NBRC 14792 / USDA 110).